Reading from the N-terminus, the 288-residue chain is Cyclin-dependent kinase 2 homolog (288 aa).

Positions Tyr-4–Phe-284 constitute a Protein kinase domain. ATP is bound by residues Ile-10–Val-18 and Lys-32. The residue at position 14 (Thr-14) is a Phosphothreonine. Tyr-15 bears the Phosphotyrosine mark. Catalysis depends on Asp-125, which acts as the Proton acceptor. At Thr-158 the chain carries Phosphothreonine.

It belongs to the protein kinase superfamily. CMGC Ser/Thr protein kinase family. CDC2/CDKX subfamily. As to quaternary structure, may form a complex composed of at least the catalytic subunit CRK2 and a cyclin. Mg(2+) serves as cofactor.

It is found in the cytoplasm. The catalysed reaction is L-seryl-[protein] + ATP = O-phospho-L-seryl-[protein] + ADP + H(+). It carries out the reaction L-threonyl-[protein] + ATP = O-phospho-L-threonyl-[protein] + ADP + H(+). The enzyme catalyses [DNA-directed RNA polymerase] + ATP = phospho-[DNA-directed RNA polymerase] + ADP + H(+). Its activity is regulated as follows. Phosphorylation at Thr-14 or Tyr-15 inactivates the enzyme, while phosphorylation at Thr-158 activates it. Functionally, serine/threonine-protein kinase. Involved in the control of the cell cycle. Required for entry into S-phase and mitosis. Probable component of the kinase complex that phosphorylates the repetitive C-terminus of RNA polymerase II. The polypeptide is Cyclin-dependent kinase 2 homolog (Plasmodium vivax).